Here is a 326-residue protein sequence, read N- to C-terminus: Palmitoyltransferase ERF2 (326 aa).

Topologically, residues 1–62 (MKGNPSTHEV…RLRAVKTARP (62 aa)) are cytoplasmic. Residues 63-83 (FSLVVLFLILSPMVLFSVFEA) traverse the membrane as a helical segment. The Lumenal portion of the chain corresponds to 84–90 (HRLWHTR). Residues 91–111 (YGYKALVVLFYYAWAWSLLSF) form a helical membrane-spanning segment. The Cytoplasmic segment spans residues 112 to 202 (TKTATSDPGV…NCVGQRNYRY (91 aa)). Residues 158–208 (KYCHTCKIWRPPRASHCSVCECCVLTHDHHCIWVNNCVGQRNYRYFLAFLL) form the DHHC domain. Cys-188 functions as the S-palmitoyl cysteine intermediate in the catalytic mechanism. A helical membrane pass occupies residues 203-223 (FLAFLLSSTLACALLIANCAL). Topologically, residues 224 to 241 (HLHRALHEGIRVSHRPLP) are lumenal. Residues 242-262 (VAVLLCVYAAVLCVYPVILLG) traverse the membrane as a helical segment. The Cytoplasmic segment spans residues 263 to 326 (YHVAMSGTQQ…GPRSCNYRYR (64 aa)).

The protein belongs to the DHHC palmitoyltransferase family. ERF2/ZDHHC9 subfamily. In terms of assembly, interacts with ERF4. In terms of processing, autopalmitoylated.

The protein localises to the endoplasmic reticulum membrane. The catalysed reaction is L-cysteinyl-[protein] + hexadecanoyl-CoA = S-hexadecanoyl-L-cysteinyl-[protein] + CoA. In terms of biological role, the ERF2-ERF4 complex is a palmitoyltransferase specific for Ras proteins. This chain is Palmitoyltransferase ERF2 (ERF2), found in Candida glabrata (strain ATCC 2001 / BCRC 20586 / JCM 3761 / NBRC 0622 / NRRL Y-65 / CBS 138) (Yeast).